A 306-amino-acid polypeptide reads, in one-letter code: Oligopeptide transport system permease protein OppB (306 aa).

Topologically, residues 1-12 are cytoplasmic; it reads MLKFILRRCLEA. The chain crosses the membrane as a helical span at residues 13–30; the sequence is IPTLFILITISFFMMRLA. Over 31 to 101 the chain is Periplasmic; it reads PGSPFTGERA…ASFPVSAKLG (71 aa). Positions 94-293 constitute an ABC transmembrane type-1 domain; sequence FPVSAKLGAA…ALTILFNAIV (200 aa). A helical membrane pass occupies residues 102–121; it reads AAAFLLAVIIGVSAGVIAAL. The Cytoplasmic segment spans residues 122–133; the sequence is KQNTRWDYTVMG. A helical membrane pass occupies residues 134–156; sequence FAMTGVVIPSFVVAPLLVMVFAI. Topologically, residues 157–165 are periplasmic; it reads TLQWLPGGG. The helical transmembrane segment at 166-188 threads the bilayer; that stretch reads WNGGALKFMILPMVALSLAYIAS. At 189–227 the chain is on the cytoplasmic side; that stretch reads IARITRGSMIEVLHSNFIRTARAKGLPMRRIIFRHALKP. A helical membrane pass occupies residues 228–250; it reads ALLPVLSYMGPAFVGIITGSMVI. Topologically, residues 251 to 277 are periplasmic; sequence ETIYGLPGIGQLFVNGALNRDYSLVLS. The chain crosses the membrane as a helical span at residues 278-300; sequence LTILVGALTILFNAIVDVLYAVI. Residues 301–306 are Cytoplasmic-facing; it reads DPKIRY.

The protein belongs to the binding-protein-dependent transport system permease family. OppBC subfamily. In terms of assembly, the complex is composed of two ATP-binding proteins (OppD and OppF), two transmembrane proteins (OppB and OppC) and a solute-binding protein (OppA).

It is found in the cell inner membrane. Functionally, part of the ABC transporter complex OppABCDF involved in the uptake of oligopeptides, including the cell wall murein tripeptide L-alanyl-gamma-D-glutamyl-meso-diaminopimelate. Responsible for the translocation of the substrate across the membrane. Plays an important nutritional role and is involved in the recycling of cell wall peptides. This Salmonella typhimurium (strain LT2 / SGSC1412 / ATCC 700720) protein is Oligopeptide transport system permease protein OppB.